The sequence spans 207 residues: Protein GrpE (207 aa).

A compositionally biased stretch (basic and acidic residues) spans 1-11 (MTETDGQKDNN). Residues 1–39 (MTETDGQKDNNQDTAQAAADPVVSKPYIMPDDPEEGSNE) form a disordered region.

It belongs to the GrpE family. Homodimer.

Its subcellular location is the cytoplasm. In terms of biological role, participates actively in the response to hyperosmotic and heat shock by preventing the aggregation of stress-denatured proteins, in association with DnaK and GrpE. It is the nucleotide exchange factor for DnaK and may function as a thermosensor. Unfolded proteins bind initially to DnaJ; upon interaction with the DnaJ-bound protein, DnaK hydrolyzes its bound ATP, resulting in the formation of a stable complex. GrpE releases ADP from DnaK; ATP binding to DnaK triggers the release of the substrate protein, thus completing the reaction cycle. Several rounds of ATP-dependent interactions between DnaJ, DnaK and GrpE are required for fully efficient folding. The polypeptide is Protein GrpE (Rhodopseudomonas palustris (strain TIE-1)).